Reading from the N-terminus, the 149-residue chain is Transcriptional repressor NrdR (149 aa).

Residues 3–34 (CPFCSTEETKVIDSRLVSDGYQVRRRRECTKC) fold into a zinc finger. The 91-residue stretch at 49–139 (PKIIKNNGMR…VYLSFENINE (91 aa)) folds into the ATP-cone domain.

It belongs to the NrdR family. Zn(2+) serves as cofactor.

Its function is as follows. Negatively regulates transcription of bacterial ribonucleotide reductase nrd genes and operons by binding to NrdR-boxes. The polypeptide is Transcriptional repressor NrdR (Mannheimia succiniciproducens (strain KCTC 0769BP / MBEL55E)).